Here is an 89-residue protein sequence, read N- to C-terminus: Small ribosomal subunit protein bS20 (89 aa).

A disordered region spans residues 1–28; that stretch reads MTLANIKSAKKRAIQSEKRRQHNASQRS.

The protein belongs to the bacterial ribosomal protein bS20 family.

Functionally, binds directly to 16S ribosomal RNA. The polypeptide is Small ribosomal subunit protein bS20 (Pasteurella multocida (strain Pm70)).